Consider the following 246-residue polypeptide: Proteasome subunit beta type-4 (246 aa).

Residues 1–23 constitute a propeptide that is removed on maturation; sequence MTTFSVPIDNGDSMKIAEEESQR. The active-site Nucleophile is the Thr24.

It belongs to the peptidase T1B family. As to quaternary structure, component of the 20S core complex of the 26S proteasome. The 26S proteasome is composed of a core protease (CP), known as the 20S proteasome, capped at one or both ends by the 19S regulatory particle (RP/PA700). The 20S proteasome core is composed of 28 subunits that are arranged in four stacked rings, resulting in a barrel-shaped structure. The two end rings are each formed by seven alpha subunits, and the two central rings are each formed by seven beta subunits. The catalytic chamber with the active sites is on the inside of the barrel. Ubiquitous low levels, higher expression in siliques and flowers.

It localises to the cytoplasm. The protein resides in the nucleus. Non-catalytic component of the proteasome, a multicatalytic proteinase complex which is characterized by its ability to cleave peptides with Arg, Phe, Tyr, Leu, and Glu adjacent to the leaving group at neutral or slightly basic pH. The proteasome has an ATP-dependent proteolytic activity. This Arabidopsis thaliana (Mouse-ear cress) protein is Proteasome subunit beta type-4 (PBG1).